A 116-amino-acid polypeptide reads, in one-letter code: Cell division protein FtsL (116 aa).

Residues 1-24 (MMLTNRQIRVRLFESLKNSFFKKT) lie on the Cytoplasmic side of the membrane. The chain crosses the membrane as a helical span at residues 25–45 (VGISFALLFILLITAFSLIVV). At 46–116 (RFEYKLQLNE…NEQKEELNNE (71 aa)) the chain is on the periplasmic side.

Belongs to the FtsL family. Part of a complex composed of FtsB, FtsL and FtsQ.

It localises to the cell inner membrane. In terms of biological role, essential cell division protein. May link together the upstream cell division proteins, which are predominantly cytoplasmic, with the downstream cell division proteins, which are predominantly periplasmic. This Francisella tularensis subsp. tularensis (strain SCHU S4 / Schu 4) protein is Cell division protein FtsL.